Consider the following 434-residue polypeptide: MQSVLYPWHRQVLRCSWSRLCLLKRYLFTMKLQSPEFQSLFTEGLKSLTELFAKENHELRIAGGAVRDLLNGVKPQDVDFATTATPTQMKEMFQSAGIRMINNKGEKHGTITARLHEENFEVTTLRIDVTTDGRHAEVEFTTDWQKDAERRDLTINSMFLGFDGTLFDYFNGYADLKNKKVRFVGHAKQRIQEDYLRILRYFRFYGRIVDRPGDHDHETLEAIAENAKGLAGISGERIWVELKKILTGDHVNHLIHLIYDLGVAPHIGLPANANLEEFNKVSKNVEGFSPKPMTLLASLFKVQDDVTKLDLRLKISKEEKNLGLFIVKNRKDLIKATDSSEPLKPYQDFVIDSREPDATARVCELLKYQGEHGLLKEMQQWSVPPFPVSGHDIRKVGISSGKEIGALLQQLREQWKKSGYRMEKDELLSYIKKT.

A mitochondrion-targeting transit peptide spans 1-41 (MQSVLYPWHRQVLRCSWSRLCLLKRYLFTMKLQSPEFQSLF). ATP contacts are provided by Gly64 and Arg67. Residues Gly64 and Arg67 each coordinate CTP. Residues Asp77 and Asp79 each coordinate Mg(2+). Residues Arg151, Asp194, Arg197, Arg200, and Arg203 each coordinate ATP. CTP contacts are provided by Arg151, Asp194, Arg197, Arg200, and Arg203. Phosphoserine is present on Ser400. Lys402 bears the N6-acetyllysine mark.

It belongs to the tRNA nucleotidyltransferase/poly(A) polymerase family. Monomer, and homodimer. Mg(2+) serves as cofactor.

Its subcellular location is the mitochondrion. The protein localises to the cytoplasm. The protein resides in the nucleus. It carries out the reaction a tRNA precursor + 2 CTP + ATP = a tRNA with a 3' CCA end + 3 diphosphate. The enzyme catalyses a tRNA with a 3' CCA end + 2 CTP + ATP = a tRNA with a 3' CCACCA end + 3 diphosphate. Its function is as follows. Nucleotidyltransferase that catalyzes the addition and repair of the essential 3'-terminal CCA sequence in tRNAs, which is necessary for the attachment of amino acids to the 3' terminus of tRNA molecules, using CTP and ATP as substrates. tRNA 3'-terminal CCA addition is required both for tRNA processing and repair. Promotes tRNA repair and recycling downstream of the ribosome-associated quality control (RQC) pathway by mediating addition of the tRNA 3'-terminal CCA following cleavage by ANKZF1 and repair by ELAC1. Also involved in tRNA surveillance by mediating tandem CCA addition to generate a CCACCA at the 3' terminus of unstable tRNAs and tRNA-like transcripts. While stable tRNAs receive only 3'-terminal CCA, unstable tRNAs beginning with GG are marked with CCACCA and rapidly degraded. The structural flexibility of RNA controls the choice between CCA versus CCACCA addition: following the first CCA addition cycle, nucleotide-binding to the active site triggers a clockwise screw motion, producing torque on the RNA. This ejects stable RNAs, whereas unstable RNAs are refolded while bound to the enzyme and subjected to a second CCA catalytic cycle. The sequence is that of CCA tRNA nucleotidyltransferase 1, mitochondrial (Trnt1) from Mus musculus (Mouse).